Here is a 302-residue protein sequence, read N- to C-terminus: NADH-cytochrome b5 reductase 2 (302 aa).

A propeptide spans 1–41 (removed in mature form); that stretch reads MFSRLSRSHSKALPIALGTVAIAAATAFYFANRNQHSFVFN. Residues 12 to 32 traverse the membrane as a helical segment; that stretch reads ALPIALGTVAIAAATAFYFAN. The region spanning 51 to 155 is the FAD-binding FR-type domain; the sequence is DKWIDLPISK…KGPIMKWKWQ (105 aa). An FAD-binding site is contributed by 158 to 193; it reads QFKSITLLGAGTGINPLYQLAHHIVENPNDKTKVNL. Ser278 is modified (phosphoserine).

Belongs to the flavoprotein pyridine nucleotide cytochrome reductase family. FAD serves as cofactor. There are two isoforms of NADH-cytochrome b5 reductase, a 34 kDa form (p34) and a 32 kDa form (p32). The p34 form becomes firmly anchored to the outer mitochondrial membrane after an incomplete translocation arrest. The p32 form is formed after translocation of the p34 precursor to the inner mitochondrial membrane, where it is processed by mitochondrial inner membrane peptidase (IMP) complex and released to the intermembrane space.

The protein localises to the mitochondrion intermembrane space. The protein resides in the mitochondrion outer membrane. It carries out the reaction 2 Fe(III)-[cytochrome b5] + NADH = 2 Fe(II)-[cytochrome b5] + NAD(+) + H(+). The outer membrane form may mediate the reduction of outer membrane cytochrome b5, and the soluble inter-membrane space form may transfer electrons from external NADH to cytochrome c, thereby mediating an antimycin-insensitive, energy-coupled oxidation of external NADH by yeast mitochondria. Involved in the reduction of D-erythroascorbyl free radicals. The polypeptide is NADH-cytochrome b5 reductase 2 (MCR1) (Saccharomyces cerevisiae (strain YJM789) (Baker's yeast)).